We begin with the raw amino-acid sequence, 423 residues long: MASALEQFVNSVRQLSAQGQMTQLCELINKSGELLAKNLSHLDTVLGALDVQEHSLGVLAVLFVKFSMPSVPDFETLFSQVQLFISTCNGEHIRYATDTFAGLCHQLTNALVERKQPLRGIGILKQAIDKMQMNTNQLTSVHADLCQLCLLAKCFKPALPYLDVDMMDICKENGAYDAKHFLCYYYYGGMIYTGLKNFERALYFYEQAITTPAMAVSHIMLESYKKYILVSLILLGKVQQLPKYTSQIVGRFIKPLSNAYHELAQVYSTNNPSELRNLVSKHSETFTRDNNMGLVKQCLSSLYKKNIQRLTKTFLTLSLQDMASRVQLSGPQEAEKYVLHMIEDGEIFASINQKDGMVSFHDNPEKYNNPAMLHNIDQEMLKCIELDERLKAMDQEITVNPQFVQKSMGSQEDDSGNKPSSYS.

An N-acetylalanine modification is found at alanine 2. The 169-residue stretch at 197 to 365 folds into the PCI domain; sequence NFERALYFYE…GMVSFHDNPE (169 aa). Positions 402-423 are disordered; sequence QFVQKSMGSQEDDSGNKPSSYS. Phosphoserine occurs at positions 407, 410, and 423.

The protein belongs to the CSN3 family. Component of the CSN complex, composed of COPS1/GPS1, COPS2, COPS3, COPS4, COPS5, COPS6, COPS7 (COPS7A or COPS7B), COPS8 and COPS9. In the complex, it probably interacts directly with COPS1, COPS4, COPS8 and COPS9. Interacts with CK2 and PKD. Interacts with the translation initiation factor EIF3S6 and IKBKG. Interacts with ERCC6. Widely expressed.

It localises to the cytoplasm. The protein resides in the nucleus. Functionally, component of the COP9 signalosome complex (CSN), a complex involved in various cellular and developmental processes. The CSN complex is an essential regulator of the ubiquitin (Ubl) conjugation pathway by mediating the deneddylation of the cullin subunits of SCF-type E3 ligase complexes, leading to decrease the Ubl ligase activity of SCF-type complexes such as SCF, CSA or DDB2. The complex is also involved in phosphorylation of p53/TP53, c-jun/JUN, IkappaBalpha/NFKBIA, ITPK1 and IRF8/ICSBP, possibly via its association with CK2 and PKD kinases. CSN-dependent phosphorylation of TP53 and JUN promotes and protects degradation by the Ubl system, respectively. Essential to maintain the survival of epiblast cells and thus the development of the postimplantation embryo. The sequence is that of COP9 signalosome complex subunit 3 (Cops3) from Mus musculus (Mouse).